Here is a 314-residue protein sequence, read N- to C-terminus: Olfactory receptor 5P72 (314 aa).

Residues 1 to 28 are Extracellular-facing; it reads MAFLEVGNHTAVTEFILLGLTDDPVLRV. N-linked (GlcNAc...) asparagine glycosylation occurs at Asn8. The helical transmembrane segment at 29–49 threads the bilayer; it reads VLFTIILCIYLVTVMGNLSTI. Over 50–57 the chain is Cytoplasmic; the sequence is LLIRVSSQ. Residues 58 to 78 form a helical membrane-spanning segment; sequence LHHPMYFFLSHLASVDMGLSS. Residues 79–102 are Extracellular-facing; the sequence is SVTPNMLLNFLIERNTISYLGCGI. A disulfide bridge links Cys100 with Cys192. A helical transmembrane segment spans residues 103–123; that stretch reads QQSLADFFGSVECFLLAAMAY. At 124–136 the chain is on the cytoplasmic side; it reads DRFMAICNPLLYS. A helical membrane pass occupies residues 137 to 157; that stretch reads TKMSTKVCVQLVVGSYIGGFL. Residues 158–199 are Extracellular-facing; the sequence is NASLIMFYFFSFLFCGPNRVDHFFCDFAPLVELSCSDVSVSV. A helical membrane pass occupies residues 200–220; that stretch reads IVISFSAGSVTMITVFVIAVS. Topologically, residues 221-240 are cytoplasmic; that stretch reads YSYILITILKMHSIEGRHKA. A helical transmembrane segment spans residues 241 to 261; it reads FSTCTSHLTAVTLYYGTITFI. The Extracellular segment spans residues 262–274; sequence YVMPKSSFSTDQN. A helical membrane pass occupies residues 275–295; sequence KVVSVFYMVMIPMLNPLIYSL. Residues 296–314 lie on the Cytoplasmic side of the membrane; that stretch reads RNNEIKGAIKRQLGKKMSC.

The protein belongs to the G-protein coupled receptor 1 family.

The protein localises to the cell membrane. Functionally, potential odorant receptor. The chain is Olfactory receptor 5P72 from Mus musculus (Mouse).